Reading from the N-terminus, the 487-residue chain is GTPase Der (487 aa).

EngA-type G domains are found at residues 5 to 169 (PKLA…SREI) and 178 to 351 (IKVA…ANSQ). GTP is bound by residues 11–18 (GRPNVGKS), 58–62 (DTGGI), 121–124 (NKID), 184–191 (GRANVGKS), 231–235 (DTAGI), and 296–299 (NKWD). The KH-like domain occupies 352–439 (KRITTHQLNK…IHLKGKTKKD (88 aa)). Residues 441 to 466 (PVSSLSLTRKQTKSTDQENNEYDELY) form a disordered region.

This sequence belongs to the TRAFAC class TrmE-Era-EngA-EngB-Septin-like GTPase superfamily. EngA (Der) GTPase family. As to quaternary structure, associates with the 50S ribosomal subunit.

Functionally, GTPase that plays an essential role in the late steps of ribosome biogenesis. This is GTPase Der from Protochlamydia amoebophila (strain UWE25).